A 163-amino-acid polypeptide reads, in one-letter code: SsrA-binding protein (163 aa).

It belongs to the SmpB family.

The protein localises to the cytoplasm. Its function is as follows. Required for rescue of stalled ribosomes mediated by trans-translation. Binds to transfer-messenger RNA (tmRNA), required for stable association of tmRNA with ribosomes. tmRNA and SmpB together mimic tRNA shape, replacing the anticodon stem-loop with SmpB. tmRNA is encoded by the ssrA gene; the 2 termini fold to resemble tRNA(Ala) and it encodes a 'tag peptide', a short internal open reading frame. During trans-translation Ala-aminoacylated tmRNA acts like a tRNA, entering the A-site of stalled ribosomes, displacing the stalled mRNA. The ribosome then switches to translate the ORF on the tmRNA; the nascent peptide is terminated with the 'tag peptide' encoded by the tmRNA and targeted for degradation. The ribosome is freed to recommence translation, which seems to be the essential function of trans-translation. This chain is SsrA-binding protein, found in Buchnera aphidicola subsp. Schizaphis graminum (strain Sg).